We begin with the raw amino-acid sequence, 417 residues long: Probable tubulin polyglutamylase ttll-9 (417 aa).

Positions 23 to 372 (QRKKKILFKC…EKKLIGNENE (350 aa)) constitute a TTL domain. Residues 188-191 (QCYV), Lys201, and Asp203 each bind ATP.

This sequence belongs to the tubulin--tyrosine ligase family. Expressed in head sensory neurons.

Functionally, polyglutamylase that forms polyglutamate side chains on tubulin. Acts when complexed with other proteins. Appears to be dispensable for polar spindle formation in dividing embryonic cells, for cilia-dependent osmotic avoidance and for male mating behavior. Probably by regulating microtubule stability via the glutamylation of tubulin, regulates PLM axon developmental growth. This chain is Probable tubulin polyglutamylase ttll-9, found in Caenorhabditis elegans.